Reading from the N-terminus, the 517-residue chain is ATP synthase subunit alpha 1 (517 aa).

176–183 (GDRQTGKT) contributes to the ATP binding site.

This sequence belongs to the ATPase alpha/beta chains family. In terms of assembly, F-type ATPases have 2 components, CF(1) - the catalytic core - and CF(0) - the membrane proton channel. CF(1) has five subunits: alpha(3), beta(3), gamma(1), delta(1), epsilon(1). CF(0) has three main subunits: a(1), b(2) and c(9-12). The alpha and beta chains form an alternating ring which encloses part of the gamma chain. CF(1) is attached to CF(0) by a central stalk formed by the gamma and epsilon chains, while a peripheral stalk is formed by the delta and b chains.

The protein resides in the cell inner membrane. It catalyses the reaction ATP + H2O + 4 H(+)(in) = ADP + phosphate + 5 H(+)(out). Functionally, produces ATP from ADP in the presence of a proton gradient across the membrane. The alpha chain is a regulatory subunit. The protein is ATP synthase subunit alpha 1 of Shewanella frigidimarina (strain NCIMB 400).